A 199-amino-acid polypeptide reads, in one-letter code: Protein-methionine-sulfoxide reductase heme-binding subunit MsrQ (199 aa).

The next 4 membrane-spanning stretches (helical) occupy residues 10-30, 82-102, 116-136, and 153-173; these read WLKVCLHLAGFLPLLWLFWAI, LWCFVWATLHLTSYALLELGI, PYLTLGIISWLVLLALTLTST, and VVYLVAILAPIHYLWSVKILS.

This sequence belongs to the MsrQ family. Heterodimer of a catalytic subunit (MsrP) and a heme-binding subunit (MsrQ). FMN is required as a cofactor. It depends on heme b as a cofactor.

It is found in the cell inner membrane. Its function is as follows. Part of the MsrPQ system that repairs oxidized periplasmic proteins containing methionine sulfoxide residues (Met-O), using respiratory chain electrons. Thus protects these proteins from oxidative-stress damage caused by reactive species of oxygen and chlorine generated by the host defense mechanisms. MsrPQ is essential for the maintenance of envelope integrity under bleach stress, rescuing a wide series of structurally unrelated periplasmic proteins from methionine oxidation, including the primary periplasmic chaperone SurA and the lipoprotein Pal. MsrQ provides electrons for reduction to the reductase catalytic subunit MsrP, using the quinone pool of the respiratory chain. In Salmonella dublin (strain CT_02021853), this protein is Protein-methionine-sulfoxide reductase heme-binding subunit MsrQ.